Reading from the N-terminus, the 259-residue chain is Haloacid dehalogenase-like hydrolase domain-containing protein 2 (259 aa).

Mg(2+)-binding residues include D13 and S15. Substrate contacts are provided by residues 13-15 (DLS) and 46-47 (TN). Positions 49-71 (TKESKRDLLERLRKLEFDISEEE) form a coiled coil. K50 carries the post-translational modification N6-succinyllysine. K179 is a substrate binding site. D204 provides a ligand contact to Mg(2+).

The protein belongs to the HAD-like hydrolase superfamily. Mg(2+) is required as a cofactor.

The protein is Haloacid dehalogenase-like hydrolase domain-containing protein 2 (Hdhd2) of Rattus norvegicus (Rat).